The primary structure comprises 302 residues: Phosphatidylglycerol--prolipoprotein diacylglyceryl transferase (302 aa).

The next 7 membrane-spanning stretches (helical) occupy residues 19-39, 67-87, 108-128, 143-163, 203-223, 232-252, and 264-284; these read FGPL…LLGW, LVLW…FVFY, IWEG…AIIL, LIAP…FING, QLYE…FAIY, GALV…LENV, and LGLT…GWLL. Arg156 is a binding site for a 1,2-diacyl-sn-glycero-3-phospho-(1'-sn-glycerol).

This sequence belongs to the Lgt family.

It is found in the cell inner membrane. It catalyses the reaction L-cysteinyl-[prolipoprotein] + a 1,2-diacyl-sn-glycero-3-phospho-(1'-sn-glycerol) = an S-1,2-diacyl-sn-glyceryl-L-cysteinyl-[prolipoprotein] + sn-glycerol 1-phosphate + H(+). The protein operates within protein modification; lipoprotein biosynthesis (diacylglyceryl transfer). Catalyzes the transfer of the diacylglyceryl group from phosphatidylglycerol to the sulfhydryl group of the N-terminal cysteine of a prolipoprotein, the first step in the formation of mature lipoproteins. This Caulobacter vibrioides (strain ATCC 19089 / CIP 103742 / CB 15) (Caulobacter crescentus) protein is Phosphatidylglycerol--prolipoprotein diacylglyceryl transferase.